The chain runs to 121 residues: Large ribosomal subunit protein uL14 (121 aa).

It belongs to the universal ribosomal protein uL14 family. In terms of assembly, part of the 50S ribosomal subunit. Forms a cluster with proteins L3 and L19. In the 70S ribosome, L14 and L19 interact and together make contacts with the 16S rRNA in bridges B5 and B8.

Functionally, binds to 23S rRNA. Forms part of two intersubunit bridges in the 70S ribosome. This Azobacteroides pseudotrichonymphae genomovar. CFP2 protein is Large ribosomal subunit protein uL14.